Here is a 117-residue protein sequence, read N- to C-terminus: Large ribosomal subunit protein bL20 (117 aa).

Belongs to the bacterial ribosomal protein bL20 family.

Binds directly to 23S ribosomal RNA and is necessary for the in vitro assembly process of the 50S ribosomal subunit. It is not involved in the protein synthesizing functions of that subunit. The chain is Large ribosomal subunit protein bL20 from Lawsonia intracellularis (strain PHE/MN1-00).